A 725-amino-acid chain; its full sequence is Dipeptidyl-peptidase 5 (725 aa).

An N-terminal signal peptide occupies residues 1–18 (MGALRWLSIAATASTALA). N-linked (GlcNAc...) asparagine glycans are attached at residues asparagine 75, asparagine 96, asparagine 153, asparagine 258, asparagine 383, and asparagine 453. Residue serine 563 is the Charge relay system of the active site. N-linked (GlcNAc...) asparagine glycosylation is present at asparagine 610. Catalysis depends on charge relay system residues aspartate 646 and histidine 678.

It belongs to the peptidase S9C family.

The protein localises to the secreted. This chain is Dipeptidyl-peptidase 5, found in Aspergillus oryzae (strain ATCC 42149 / RIB 40) (Yellow koji mold).